Consider the following 659-residue polypeptide: Biosynthetic arginine decarboxylase 2 (659 aa).

Residue Lys119 is modified to N6-(pyridoxal phosphate)lysine. 311-321 contacts substrate; the sequence is LNVGGGLAVDY.

It belongs to the Orn/Lys/Arg decarboxylase class-II family. SpeA subfamily. It depends on Mg(2+) as a cofactor. Requires pyridoxal 5'-phosphate as cofactor.

The catalysed reaction is L-arginine + H(+) = agmatine + CO2. Its function is as follows. Catalyzes the biosynthesis of agmatine from arginine. The chain is Biosynthetic arginine decarboxylase 2 (speA2) from Synechocystis sp. (strain ATCC 27184 / PCC 6803 / Kazusa).